The primary structure comprises 345 residues: Glycerol-3-phosphate dehydrogenase [NAD(P)+] (345 aa).

Residues Ser23, Tyr24, His44, and Lys118 each coordinate NADPH. Lys118, Gly147, and Thr149 together coordinate sn-glycerol 3-phosphate. Position 151 (Ala151) interacts with NADPH. The sn-glycerol 3-phosphate site is built by Lys203, Asp256, Ser266, Arg267, and Asn268. Lys203 serves as the catalytic Proton acceptor. An NADPH-binding site is contributed by Arg267. Positions 291 and 293 each coordinate NADPH.

This sequence belongs to the NAD-dependent glycerol-3-phosphate dehydrogenase family.

The protein localises to the cytoplasm. The enzyme catalyses sn-glycerol 3-phosphate + NAD(+) = dihydroxyacetone phosphate + NADH + H(+). It carries out the reaction sn-glycerol 3-phosphate + NADP(+) = dihydroxyacetone phosphate + NADPH + H(+). It participates in membrane lipid metabolism; glycerophospholipid metabolism. Functionally, catalyzes the reduction of the glycolytic intermediate dihydroxyacetone phosphate (DHAP) to sn-glycerol 3-phosphate (G3P), the key precursor for phospholipid synthesis. This chain is Glycerol-3-phosphate dehydrogenase [NAD(P)+], found in Vibrio campbellii (strain ATCC BAA-1116).